The primary structure comprises 356 residues: Tyrosine recombinase XerS (356 aa).

The region spanning 16 to 121 (VMPWYVLDYY…ALSSLYKYLT (106 aa)) is the Core-binding (CB) domain. The region spanning 169 to 354 (AFLDYVDKEY…VNDEQKNALD (186 aa)) is the Tyr recombinase domain. Catalysis depends on residues arginine 210, lysine 234, histidine 306, arginine 309, and histidine 332. The active-site O-(3'-phospho-DNA)-tyrosine intermediate is tyrosine 341.

This sequence belongs to the 'phage' integrase family. XerS subfamily.

Its subcellular location is the cytoplasm. FtsK is required for recombination. Its function is as follows. Site-specific tyrosine recombinase, which acts by catalyzing the cutting and rejoining of the recombining DNA molecules. Essential to convert dimers of the bacterial chromosome into monomers to permit their segregation at cell division. This is Tyrosine recombinase XerS from Streptococcus pyogenes serotype M28 (strain MGAS6180).